The chain runs to 1173 residues: 3-hydroxy-3-methylglutaryl coenzyme A reductase mlcD (1173 aa).

N-linked (GlcNAc...) asparagine glycans are attached at residues Asn-143 and Asn-186. The SSD domain occupies 241–420 (DVVVMVLGYI…FTFYTAILSI (180 aa)). Transmembrane regions (helical) follow at residues 242–262 (VVVM…LFLS), 272–292 (LATS…DVAI), 302–322 (LLSE…SITL), 368–388 (NIVC…VLGI), 397–417 (VLAA…YTAI), 479–499 (FWMV…TLFQ), and 594–614 (VLSK…SYLF). Residues 498-673 (FQASSSGSLS…FTPTTTDSDS (176 aa)) are linker. Residues 647 to 666 (NQTPQIQSSLQAPQTRVFTP) are compositionally biased toward polar residues. The disordered stretch occupies residues 647 to 669 (NQTPQIQSSLQAPQTRVFTPTTT). A catalytic region spans residues 674 to 1133 (DASLVLIKAS…LVKAHMAHNR (460 aa)). Glu-822 functions as the Charge relay system in the catalytic mechanism. Residue Asn-886 is glycosylated (N-linked (GlcNAc...) asparagine). Lys-956 acts as the Charge relay system in catalysis. Asn-997 is a glycosylation site (N-linked (GlcNAc...) asparagine). The Charge relay system role is filled by Asp-1032. Residue His-1128 is the Proton donor of the active site. A glycan (N-linked (GlcNAc...) asparagine) is linked at Asn-1132. The tract at residues 1132 to 1173 (NRSAPASSAPSRSVSPSGGTRTVPVPNNALRPSAAATDRARR) is disordered. The span at 1133–1148 (RSAPASSAPSRSVSPS) shows a compositional bias: low complexity.

The protein belongs to the HMG-CoA reductase family.

It localises to the endoplasmic reticulum membrane. It catalyses the reaction (R)-mevalonate + 2 NADP(+) + CoA = (3S)-3-hydroxy-3-methylglutaryl-CoA + 2 NADPH + 2 H(+). It participates in polyketide biosynthesis. HMG-CoA reductase; part of the gene cluster that mediates the biosynthesis of compactin, also known as mevastatin or ML-236B, and which acts as a potent competitive inhibitor of HMG-CoA reductase. Compactin biosynthesis is performed in two stages. The first stage is catalyzed by the nonaketide synthase mlcA, which belongs to type I polyketide synthases and catalyzes the iterative nine-step formation of the polyketide. This PKS stage is completed by the action of dehydrogenase mlcG, which catalyzes the NADPH-dependent reduction of the unsaturated tetra-, penta- and heptaketide intermediates that arise during the mlcA-mediated biosynthesis of the nonaketide chain and leads to dihydro-ML-236C carboxylate. Covalently bound dihydro-ML-236C carboxylate is released from mlcA by the mlcF esterase. Conversion of dihydro-ML-236C carboxylate into ML-236A carboxylate is subsequently performed with the participation of molecular oxygen and P450 monoogygenase mlcC. Finally, mlcH performs the conversion of ML-236A carboxylate to ML-236B/compactin carboxylate through the addition of the side-chain diketide moiety produced by the diketide synthase mlcB. HMG-CoA reductase mlcD may act as a down-regulator of compactin production and is involved in conferring resistance to ML-236B/compactin. The sequence is that of 3-hydroxy-3-methylglutaryl coenzyme A reductase mlcD from Penicillium citrinum.